Here is a 380-residue protein sequence, read N- to C-terminus: Protein Wnt-5a (380 aa).

The first 37 residues, 1–37 (MKKPIGILSPGVALGTAGGAMSSKFFLMALATFFSFA), serve as a signal peptide directing secretion. Residues 38-61 (QVVIEANSWWSLGMNNPVQMSEVH) constitute a propeptide that is removed on maturation. Cysteines 104 and 115 form a disulfide. N-linked (GlcNAc...) asparagine glycans are attached at residues Asn-114 and Asn-120. 10 disulfide bridges follow: Cys-154-Cys-162, Cys-164-Cys-182, Cys-238-Cys-252, Cys-240-Cys-247, Cys-309-Cys-340, Cys-325-Cys-335, Cys-339-Cys-379, Cys-355-Cys-370, Cys-357-Cys-367, and Cys-362-Cys-363. The O-palmitoleoyl serine; by PORCN moiety is linked to residue Ser-244. N-linked (GlcNAc...) asparagine glycans are attached at residues Asn-312 and Asn-326.

This sequence belongs to the Wnt family. In terms of assembly, forms a soluble 1:1 complex with AFM; this prevents oligomerization and is required for prolonged biological activity. The complex with AFM may represent the physiological form in body fluids. Homooligomer; disulfide-linked, leading to inactivation (in vitro). Interacts with PORCN. Interacts with WLS. Interacts with glypican GCP3. Interacts with PKD1 (via extracellular domain). Interacts with TMEM67. Glycosylation is necessary for secretion but not for activity. Post-translationally, palmitoleoylation is required for efficient binding to frizzled receptors. Depalmitoleoylation leads to Wnt signaling pathway inhibition. In terms of processing, proteolytic processing by TIKI1 and TIKI2 promotes oxidation and formation of large disulfide-bond oligomers, leading to inactivation of WNT5A.

Its subcellular location is the secreted. It localises to the extracellular space. It is found in the extracellular matrix. Functionally, ligand for members of the frizzled family of seven transmembrane receptors. Can activate or inhibit canonical Wnt signaling, depending on receptor context. In the presence of FZD4, activates beta-catenin signaling. In the presence of ROR2, inhibits the canonical Wnt pathway by promoting beta-catenin degradation through a GSK3-independent pathway which involves down-regulation of beta-catenin-induced reporter gene expression. Suppression of the canonical pathway allows chondrogenesis to occur and inhibits tumor formation. Stimulates cell migration. Decreases proliferation, migration, invasiveness and clonogenicity of carcinoma cells and may act as a tumor suppressor. Mediates motility of melanoma cells. Required during embryogenesis for extension of the primary anterior-posterior axis and for outgrowth of limbs and the genital tubercle. Inhibits type II collagen expression in chondrocytes. The chain is Protein Wnt-5a (Wnt5a) from Rattus norvegicus (Rat).